We begin with the raw amino-acid sequence, 422 residues long: MVTIVLGAQFGDEGKGKITDLLSQSATLCCRAAGGHNAGHTIVHDNITYDFHILPSGLISPDCVNLIGSGTVVHVPSFFKELDALKAKGLKEADKRIFISDRAHVCFDLHSVVDGLEEADLAGKKVGTTGKGIGPCYSDKASRRGVRIGEVLEEGVAEDKLRSLEAGYRRRFGELQYDLEDEVKRFNEYRTKLQPYVVDQMAFLEKYRSCPSVLVEGANALMLDIDHGTYPYVTSSCTGLGGAIQGLTLNPTSIKSIVGVVKAYTTRVGSGPFPTEQINDIGEKLQSVGREFGVTTGRRRRCGWLDMVMCRYSNAINHYTTINLTKLDILDDFDEIKVAVAYKLDGRRLESFPAQLEVLDKVEVEYVTFPGWKSNTMGVTRWEDLPVNARRYVQFIEQEMGGVPIKWIGTGPARTHMIEREV.

Residues 11–17 (GDEGKGK) and 39–41 (GHT) each bind GTP. Catalysis depends on D12, which acts as the Proton acceptor. D12 and G39 together coordinate Mg(2+). Residues 12–15 (DEGK), 37–40 (NAGH), T129, R143, N219, T234, and R298 each bind IMP. Residue H40 is the Proton donor of the active site. Residue 294 to 300 (VTTGRRR) participates in substrate binding. GTP contacts are provided by residues R300, 326-328 (KLD), and 409-411 (GTG).

It belongs to the adenylosuccinate synthetase family. Homodimer. Requires Mg(2+) as cofactor.

The protein localises to the cytoplasm. The enzyme catalyses IMP + L-aspartate + GTP = N(6)-(1,2-dicarboxyethyl)-AMP + GDP + phosphate + 2 H(+). The protein operates within purine metabolism; AMP biosynthesis via de novo pathway; AMP from IMP: step 1/2. Functionally, plays an important role in the de novo pathway and in the salvage pathway of purine nucleotide biosynthesis. Catalyzes the first committed step in the biosynthesis of AMP from IMP. The protein is Adenylosuccinate synthetase of Blastomyces gilchristii (strain SLH14081) (Blastomyces dermatitidis).